The chain runs to 262 residues: MIDQTAFIHPSSIVEDGAIIGAGVHIGPFCYIGSQVEIGAGTVLKSHVVVNGVTKIGRDNEIYQFTSIGEVNQDLKYAGEPTRVEIGDRNRIRESVTIHRGTSQGGGLTKVGSDNLLMINTHIAHDCVVGNRCILANNATLGGHVSVDDFAIIGGMTAVHQFCIIGAHVMVGGCSGVAQDVPPYVVAQGNHATPFGLNIEGLKRRGFEKETLHAIRNAYKLLYRSGKTLDEVKPEIEALAAEHPAVQAFTDFFARSTRGIIR.

Belongs to the transferase hexapeptide repeat family. LpxA subfamily. Homotrimer.

It localises to the cytoplasm. It catalyses the reaction a (3R)-hydroxyacyl-[ACP] + UDP-N-acetyl-alpha-D-glucosamine = a UDP-3-O-[(3R)-3-hydroxyacyl]-N-acetyl-alpha-D-glucosamine + holo-[ACP]. The protein operates within glycolipid biosynthesis; lipid IV(A) biosynthesis; lipid IV(A) from (3R)-3-hydroxytetradecanoyl-[acyl-carrier-protein] and UDP-N-acetyl-alpha-D-glucosamine: step 1/6. Its function is as follows. Involved in the biosynthesis of lipid A, a phosphorylated glycolipid that anchors the lipopolysaccharide to the outer membrane of the cell. This chain is Acyl-[acyl-carrier-protein]--UDP-N-acetylglucosamine O-acyltransferase, found in Pectobacterium atrosepticum (strain SCRI 1043 / ATCC BAA-672) (Erwinia carotovora subsp. atroseptica).